The sequence spans 211 residues: MLTIALPKGALLKDSVAYFQRLGLNFEALLEPANRQLQVLSQDGRARALLVRAQDVPVYVQYGQAQLGIVGYDVLREKNPHVAKLADLGFGQCRLSVAVKASSPYRSARDLPPHCRVASKFVRCADAFFQQLDLPVDIVPLYGSVELGPITGMAEAIVDLVSTGRTLKENGLVEIEQIFSSTAYLIAHPRSYRLNLNGLGHYVPQLTGAIA.

Belongs to the ATP phosphoribosyltransferase family. Short subfamily. Heteromultimer composed of HisG and HisZ subunits.

The protein localises to the cytoplasm. The enzyme catalyses 1-(5-phospho-beta-D-ribosyl)-ATP + diphosphate = 5-phospho-alpha-D-ribose 1-diphosphate + ATP. It participates in amino-acid biosynthesis; L-histidine biosynthesis; L-histidine from 5-phospho-alpha-D-ribose 1-diphosphate: step 1/9. Functionally, catalyzes the condensation of ATP and 5-phosphoribose 1-diphosphate to form N'-(5'-phosphoribosyl)-ATP (PR-ATP). Has a crucial role in the pathway because the rate of histidine biosynthesis seems to be controlled primarily by regulation of HisG enzymatic activity. The protein is ATP phosphoribosyltransferase of Thermosynechococcus vestitus (strain NIES-2133 / IAM M-273 / BP-1).